The sequence spans 392 residues: 8-amino-7-oxononanoate synthase (392 aa).

Position 108–109 (108–109 (GF)) interacts with pyridoxal 5'-phosphate. A substrate-binding site is contributed by histidine 133. Residues serine 180, 205-208 (DDAH), and 236-239 (TLSK) contribute to the pyridoxal 5'-phosphate site. Lysine 239 carries the N6-(pyridoxal phosphate)lysine modification. Threonine 353 is a binding site for substrate.

This sequence belongs to the class-II pyridoxal-phosphate-dependent aminotransferase family. BioF subfamily. Homodimer. Pyridoxal 5'-phosphate serves as cofactor.

It carries out the reaction 6-carboxyhexanoyl-[ACP] + L-alanine + H(+) = (8S)-8-amino-7-oxononanoate + holo-[ACP] + CO2. Its pathway is cofactor biosynthesis; biotin biosynthesis. In terms of biological role, catalyzes the decarboxylative condensation of pimeloyl-[acyl-carrier protein] and L-alanine to produce 8-amino-7-oxononanoate (AON), [acyl-carrier protein], and carbon dioxide. This is 8-amino-7-oxononanoate synthase from Bacillus pumilus (strain SAFR-032).